A 362-amino-acid chain; its full sequence is sn-glycerol-3-phosphate import ATP-binding protein UgpC (362 aa).

Residues 4 to 235 (LTLQSVKKTY…PATVFVASFI (232 aa)) form the ABC transporter domain. Residue 37-44 (GPSGCGKS) coordinates ATP.

It belongs to the ABC transporter superfamily. sn-glycerol-3-phosphate importer (TC 3.A.1.1.3) family. In terms of assembly, the complex is composed of two ATP-binding proteins (UgpC), two transmembrane proteins (UgpA and UgpE) and a solute-binding protein (UgpB).

It localises to the cell inner membrane. The catalysed reaction is sn-glycerol 3-phosphate(out) + ATP + H2O = sn-glycerol 3-phosphate(in) + ADP + phosphate + H(+). In terms of biological role, part of the ABC transporter complex UgpBAEC involved in sn-glycerol-3-phosphate (G3P) import. Responsible for energy coupling to the transport system. The polypeptide is sn-glycerol-3-phosphate import ATP-binding protein UgpC (Paraburkholderia xenovorans (strain LB400)).